The following is a 258-amino-acid chain: Acetylglutamate kinase (258 aa).

Substrate is bound by residues 41–42 (GG), R63, and N156.

It belongs to the acetylglutamate kinase family. ArgB subfamily.

It localises to the cytoplasm. It catalyses the reaction N-acetyl-L-glutamate + ATP = N-acetyl-L-glutamyl 5-phosphate + ADP. Its pathway is amino-acid biosynthesis; L-arginine biosynthesis; N(2)-acetyl-L-ornithine from L-glutamate: step 2/4. Its function is as follows. Catalyzes the ATP-dependent phosphorylation of N-acetyl-L-glutamate. This is Acetylglutamate kinase from Geobacillus thermodenitrificans (strain NG80-2).